A 77-amino-acid chain; its full sequence is Tautomerase PptA (77 aa).

The active-site Proton acceptor; via imino nitrogen is Pro-2.

It belongs to the 4-oxalocrotonate tautomerase family. PptA subfamily. As to quaternary structure, homodimer.

It is found in the cytoplasm. The polypeptide is Tautomerase PptA (Escherichia coli (strain K12 / MC4100 / BW2952)).